Reading from the N-terminus, the 434-residue chain is UDP-N-acetylglucosamine 1-carboxyvinyltransferase 1 (434 aa).

22 to 23 serves as a coordination point for phosphoenolpyruvate; it reads KN. Residue Arg93 coordinates UDP-N-acetyl-alpha-D-glucosamine. Cys117 (proton donor) is an active-site residue. The residue at position 117 (Cys117) is a 2-(S-cysteinyl)pyruvic acid O-phosphothioketal. Residues 122–126, Asp306, and Val328 each bind UDP-N-acetyl-alpha-D-glucosamine; that span reads RPIDQ.

Belongs to the EPSP synthase family. MurA subfamily.

Its subcellular location is the cytoplasm. It carries out the reaction phosphoenolpyruvate + UDP-N-acetyl-alpha-D-glucosamine = UDP-N-acetyl-3-O-(1-carboxyvinyl)-alpha-D-glucosamine + phosphate. It functions in the pathway cell wall biogenesis; peptidoglycan biosynthesis. Its function is as follows. Cell wall formation. Adds enolpyruvyl to UDP-N-acetylglucosamine. The polypeptide is UDP-N-acetylglucosamine 1-carboxyvinyltransferase 1 (Bacillus anthracis).